We begin with the raw amino-acid sequence, 446 residues long: GRAM domain-containing protein 2B (446 aa).

The residue at position 1 (Met1) is an N-acetylmethionine. Residues 1-120 form a disordered region; that stretch reads MVKKRLPSND…RKKSSSSSQY (120 aa). Residues 29-43 show a composition bias toward low complexity; it reads SRSSTDSPSSVFFSS. Over residues 95 to 113 the composition is skewed to basic and acidic residues; sequence DKNDCKTESKNDPKTERKK. Residues 124-191 form the GRAM domain; sequence MHFHKLFLSV…FSVTLIKKTK (68 aa). A compositionally biased stretch (polar residues) spans 234-247; that stretch reads TSVGNSPNPSSAEN. Residues 234 to 253 form a disordered region; sequence TSVGNSPNPSSAENSFRADR. Residues Ser239, Ser256, and Ser266 each carry the phosphoserine modification. The tract at residues 276–298 is disordered; it reads RQDMEGYSSSGSQTPESENSRDF. Polar residues predominate over residues 282–292; the sequence is YSSSGSQTPES.

This Pongo abelii (Sumatran orangutan) protein is GRAM domain-containing protein 2B (GRAMD2B).